Here is a 504-residue protein sequence, read N- to C-terminus: Maturase K (504 aa).

Belongs to the intron maturase 2 family. MatK subfamily.

The protein resides in the plastid. The protein localises to the chloroplast. Functionally, usually encoded in the trnK tRNA gene intron. Probably assists in splicing its own and other chloroplast group II introns. The protein is Maturase K of Quercus suber (Cork oak).